The chain runs to 664 residues: MEGVSALLASCPTAGLAGGLGVTACAAAGVVLYRIARRVKPTHTMVNCWFCNHDTLVPYGNRNCWDCPHCEQYNGFQENGDYNKPIPAQYMEHLNHVVSSVPSPRDPAQPQQWVSSQVLLCRRCSHHQTTKIKQLAAFTPREEGRYDEEIEVYRHHLEQMYKLCRPCQAAVEYYIKHQNRQLRALLLSHQFRRREADQAHGQSFSSSAVKAPFQVILLRALAFLACAFLLFTTLYGPSEPFTPGAALPPALPPGGNSSAASDNTTSQAEGWQQLLGLLPEHATEKLHEAWAFGQSHQTSIVAVGLLTCLLAMLLAGRIRLRRIDAFSTCLWALLLGLHLAEHYLQAASPGWLDTLKFSTTSLCCLVGFTAAVATRKSTGPRRFRPRRYFSGDSASLFPSSPSLAVPYPSVTSSPASLFIPTPPGFLPLTKQQLFRSPRRVSPSSLPGRLSRALSLGTIPPLTRTDSGYLFSGSRPPSRVSPAGEVSLSDYFSLLSSSFPASPLPSPAPSVASSVASSSGSLRHRRPLISPARLNLKGQKLLLFSSPGEAPNTPSSSEEFSPPNGSLFIESPQLPQRNHTRDTKHTMEMRSMLARDSARSSHSIKKEDESSQSSTCVVDTTTKGCSEETTPWKARVSPSLVRGLLAVSLAVNALFTSAYLYQSLR.

Met1 is modified (N-acetylmethionine). The Nuclear segment spans residues 1 to 214; that stretch reads MEGVSALLAS…SSSAVKAPFQ (214 aa). A helical membrane pass occupies residues 215-235; sequence VILLRALAFLACAFLLFTTLY. Over 236–297 the chain is Perinuclear space; the sequence is GPSEPFTPGA…EAWAFGQSHQ (62 aa). Positions 245-261 are enriched in low complexity; sequence AALPPALPPGGNSSAAS. Residues 245-264 form a disordered region; sequence AALPPALPPGGNSSAASDNT. The helical transmembrane segment at 298-318 threads the bilayer; sequence TSIVAVGLLTCLLAMLLAGRI. Topologically, residues 319 to 322 are nuclear; that stretch reads RLRR. The chain crosses the membrane as a helical span at residues 323–343; it reads IDAFSTCLWALLLGLHLAEHY. At 344 to 356 the chain is on the perinuclear space side; that stretch reads LQAASPGWLDTLK. The chain crosses the membrane as a helical span at residues 357 to 374; the sequence is FSTTSLCCLVGFTAAVAT. Topologically, residues 375 to 642 are nuclear; sequence RKSTGPRRFR…ARVSPSLVRG (268 aa). Phosphoserine occurs at positions 441, 444, 450, 454, 466, 477, and 480. The segment at 502 to 522 is disordered; that stretch reads PLPSPAPSVASSVASSSGSLR. Positions 508-520 are enriched in low complexity; that stretch reads PSVASSVASSSGS. Ser529 carries the post-translational modification Phosphoserine. Residues 544–629 are disordered; the sequence is SSPGEAPNTP…TTKGCSEETT (86 aa). 2 stretches are compositionally biased toward basic and acidic residues: residues 578–587 and 595–608; these read HTRDTKHTME and DSAR…KEDE. Positions 610 to 628 are enriched in polar residues; the sequence is SQSSTCVVDTTTKGCSEET. A helical membrane pass occupies residues 643–663; that stretch reads LLAVSLAVNALFTSAYLYQSL. Position 664 (Arg664) is a topological domain, perinuclear space.

Belongs to the TMEM201 family. In terms of assembly, isoform 2 interacts with EMD. Isoform 3 interacts with SUN2 and LMNA. May bind to Ran GTPase; has a greater affinity for Ran-GTP over Ran-GDP.

The protein localises to the nucleus inner membrane. In terms of biological role, critical regulator of angiogenesis and endothelial cell (EC) migration. Promotes the migration of endothelial cells, which is essential for angiogenesis. Interacts with the linker of nucleoskeleton and cytoskeleton (LINC) complex, which plays a vital role in connecting the cell's cytoskeleton to the nuclear envelope. This interaction is essential for maintaining cellular structure and facilitating the movement of endothelial cells, which is critical for proper vascular development. Involved in nuclear movement during fibroblast polarization and migration. May recruit Ran GTPase to the nuclear periphery. Its function is as follows. May define a distinct membrane domain in the vicinity of the mitotic spindle. Involved in the organization of the nuclear envelope implicating EMD, SUN1 and A-type lamina. Functionally, proposed to be involved in actin-dependent nuclear movement; via SUN2 associates with transmembrane actin-associated nuclear (TAN) lines which are bound to F-actin cables and couple the nucleus to retrograde actin flow. The protein is Transmembrane protein 201 (Tmem201) of Mus musculus (Mouse).